A 431-amino-acid polypeptide reads, in one-letter code: Enolase (431 aa).

The interval 27 to 47 (LESGHSGRAAVPSGASTGSRE) is disordered. A (2R)-2-phosphoglycerate-binding site is contributed by Gln-163. Residue Glu-205 is the Proton donor of the active site. Residues Asp-242, Glu-285, and Asp-312 each coordinate Mg(2+). (2R)-2-phosphoglycerate is bound by residues Lys-337, Arg-366, Ser-367, and Lys-388. Residue Lys-337 is the Proton acceptor of the active site.

Belongs to the enolase family. It depends on Mg(2+) as a cofactor.

It localises to the cytoplasm. The protein localises to the secreted. Its subcellular location is the cell surface. It catalyses the reaction (2R)-2-phosphoglycerate = phosphoenolpyruvate + H2O. The protein operates within carbohydrate degradation; glycolysis; pyruvate from D-glyceraldehyde 3-phosphate: step 4/5. Catalyzes the reversible conversion of 2-phosphoglycerate (2-PG) into phosphoenolpyruvate (PEP). It is essential for the degradation of carbohydrates via glycolysis. This Oleidesulfovibrio alaskensis (strain ATCC BAA-1058 / DSM 17464 / G20) (Desulfovibrio alaskensis) protein is Enolase.